The primary structure comprises 122 residues: UPF0102 protein RHECIAT_CH0000358 (122 aa).

The protein belongs to the UPF0102 family.

This is UPF0102 protein RHECIAT_CH0000358 from Rhizobium etli (strain CIAT 652).